A 251-amino-acid polypeptide reads, in one-letter code: Regulator of G-protein signaling 7-binding protein B (251 aa).

The interval 1–43 (MCSAPNGRKNRPRSAANIFQIGKSSVRDPERRESTESARRAQR) is disordered. Basic and acidic residues predominate over residues 25–43 (SVRDPERRESTESARRAQR). Residues Cys-246 and Cys-247 are each lipidated (S-palmitoyl cysteine).

The protein belongs to the RGS7BP/RGS9BP family. In terms of processing, palmitoylated. Undergoes rapid palmitoylation turnover. Palmitoylation regulates the cell membrane and nuclear shuttling and the regulation of GPCR signaling. Upon depalmitoylation, it is targeted from the plasma membrane into the nucleus. GPCR signaling inhibits depalmitoylation and promotes localization to the plasma membrane.

The protein localises to the nucleus. It is found in the cytoplasm. The protein resides in the cell membrane. Functionally, regulator of G protein-coupled receptor (GPCR) signaling. Regulatory subunit of the R7-Gbeta5 complexes that acts by controlling the subcellular location of the R7-Gbeta5 complexes. When palmitoylated, it targets the R7-Gbeta5 complexes to the plasma membrane, leading to inhibit G protein alpha subunits. When it is unpalmitoylated, the R7-Gbeta5 complexes undergo a nuclear/cytoplasmic shuttling. The sequence is that of Regulator of G-protein signaling 7-binding protein B (rgs7bpb) from Danio rerio (Zebrafish).